Consider the following 312-residue polypeptide: Malate dehydrogenase (312 aa).

NAD(+) contacts are provided by residues 12–17 (GAGFTG) and Asp36. Residues Arg87 and Arg93 each contribute to the substrate site. NAD(+)-binding positions include Asn100 and 123–125 (LTN). Asn125 is a substrate binding site. Ser149 is modified (phosphoserine). Arg156 is a substrate binding site. Residue His180 is the Proton acceptor of the active site.

The protein belongs to the LDH/MDH superfamily. MDH type 3 family.

It carries out the reaction (S)-malate + NAD(+) = oxaloacetate + NADH + H(+). Functionally, catalyzes the reversible oxidation of malate to oxaloacetate. This chain is Malate dehydrogenase, found in Anoxybacillus flavithermus (strain DSM 21510 / WK1).